The primary structure comprises 289 residues: Lipoyl synthase 1 (289 aa).

7 residues coordinate [4Fe-4S] cluster: Cys-33, Cys-38, Cys-44, Cys-59, Cys-63, Cys-66, and Ser-274. Residues 45 to 263 enclose the Radical SAM core domain; the sequence is FAGGTATFLI…RIGEEELGFL (219 aa).

Belongs to the radical SAM superfamily. Lipoyl synthase family. It depends on [4Fe-4S] cluster as a cofactor.

It is found in the cytoplasm. The catalysed reaction is [[Fe-S] cluster scaffold protein carrying a second [4Fe-4S](2+) cluster] + N(6)-octanoyl-L-lysyl-[protein] + 2 oxidized [2Fe-2S]-[ferredoxin] + 2 S-adenosyl-L-methionine + 4 H(+) = [[Fe-S] cluster scaffold protein] + N(6)-[(R)-dihydrolipoyl]-L-lysyl-[protein] + 4 Fe(3+) + 2 hydrogen sulfide + 2 5'-deoxyadenosine + 2 L-methionine + 2 reduced [2Fe-2S]-[ferredoxin]. The protein operates within protein modification; protein lipoylation via endogenous pathway; protein N(6)-(lipoyl)lysine from octanoyl-[acyl-carrier-protein]: step 2/2. Catalyzes the radical-mediated insertion of two sulfur atoms into the C-6 and C-8 positions of the octanoyl moiety bound to the lipoyl domains of lipoate-dependent enzymes, thereby converting the octanoylated domains into lipoylated derivatives. This is Lipoyl synthase 1 from Parasynechococcus marenigrum (strain WH8102).